The chain runs to 591 residues: Probable anion transporter 4, chloroplastic (591 aa).

A disordered region spans residues 1 to 38 (MAMGAVLSSRTFASPLSSSGKQHPPQNNKCTCSSPPTR). Residues 1-76 (MAMGAVLSSR…LSARFHQPVV (76 aa)) constitute a chloroplast transit peptide. Residues 8 to 36 (SSRTFASPLSSSGKQHPPQNNKCTCSSPP) are compositionally biased toward polar residues. Transmembrane regions (helical) follow at residues 184–204 (VVLLCFFSFLLCNMDRVNMSI), 220–240 (VGLIQSSFFWGYLLTQILGGI), 249–269 (VVLGFGVVWWSIATVLTPLAA), 271–291 (IGLPFLLVMRAFMGIGEGVAM), 313–333 (LVYSGMYLGSVTGLAFSPLLI), 336–356 (FGWPSVFYAFGSLGSVWFALW), 402–422 (VWALIVSHFCHNWGTFILLTW), 440–460 (LLCVLPWLTMAIFANIGGWIA), 475–495 (KIMQSIGFLGPALFLTLLSKV), 531–551 (AGVLLGLSNTAGVLAGVFGTA), and 565–585 (VFQVAVVLYIVGTVVWNVFST).

Belongs to the major facilitator superfamily. Sodium/anion cotransporter (TC 2.A.1.14) family.

Its subcellular location is the plastid. The protein resides in the chloroplast membrane. In terms of biological role, probable anion transporter. In Oryza sativa subsp. japonica (Rice), this protein is Probable anion transporter 4, chloroplastic (PHT4;4).